The primary structure comprises 474 residues: Gamma-aminobutyric acid receptor subunit beta-1 (474 aa).

The first 25 residues, 1–25 (MWTVQNRESLGLLSFPVMITMVCCA), serve as a signal peptide directing secretion. The Extracellular portion of the chain corresponds to 26–245 (HSTNEPSNMS…SFRLKRNIGY (220 aa)). N-linked (GlcNAc...) asparagine glycosylation is present at Asn-105. Tyr-122 is a histamine binding site. Cys-161 and Cys-175 are oxidised to a cystine. Asn-174 is a glycosylation site (N-linked (GlcNAc...) asparagine). Residues 181–182 (SY) and Thr-227 contribute to the histamine site. The 4-aminobutanoate site is built by Tyr-182 and Thr-227. Transmembrane regions (helical) follow at residues 246-267 (FILQ…SFWI), 271-293 (ASAA…STHL), and 305-327 (AIDI…YAFV). The Cytoplasmic segment spans residues 328-451 (NYIFFGKGPQ…DLTDVNSIDK (124 aa)). Residues 452–473 (WSRMFFPITFSLFNVVYWLYYV) form a helical membrane-spanning segment.

This sequence belongs to the ligand-gated ion channel (TC 1.A.9) family. Gamma-aminobutyric acid receptor (TC 1.A.9.5) subfamily. GABRB1 sub-subfamily. In terms of assembly, heteropentamer, formed by a combination of alpha (GABRA1-6), beta (GABRB1-3), gamma (GABRG1-3), delta (GABRD), epsilon (GABRE), rho (GABRR1-3), pi (GABRP) and theta (GABRQ) chains, each subunit exhibiting distinct physiological and pharmacological properties. Binds UBQLN1.

It is found in the postsynaptic cell membrane. It localises to the cell membrane. It carries out the reaction chloride(in) = chloride(out). Potentiated by etomidate, propofol, pregnanolone and flurazepam. Potentiated by histamine. Beta subunit of the heteropentameric ligand-gated chloride channel gated by gamma-aminobutyric acid (GABA), a major inhibitory neurotransmitter in the brain. GABA-gated chloride channels, also named GABA(A) receptors (GABAAR), consist of five subunits arranged around a central pore and contain one or two GABA active binding sites located at the alpha and beta subunit interfaces, depending on subunit composition. When activated by GABA, GABAARs selectively allow the flow of chloride anions across the cell membrane down their electrochemical gradient. Chloride influx into the postsynaptic neuron following GABAAR opening decreases the neuron ability to generate a new action potential, thereby reducing nerve transmission. Beta-containing GABAARs can simultaneously bind GABA and histamine where histamine binds at the interface of two neighboring beta subunits, which may be involved in the regulation of sleep and wakefulness. The sequence is that of Gamma-aminobutyric acid receptor subunit beta-1 from Homo sapiens (Human).